Here is a 471-residue protein sequence, read N- to C-terminus: Argininosuccinate lyase (471 aa).

Belongs to the lyase 1 family. Argininosuccinate lyase subfamily.

Its subcellular location is the cytoplasm. The catalysed reaction is 2-(N(omega)-L-arginino)succinate = fumarate + L-arginine. Its pathway is amino-acid biosynthesis; L-arginine biosynthesis; L-arginine from L-ornithine and carbamoyl phosphate: step 3/3. The polypeptide is Argininosuccinate lyase (Paramagnetospirillum magneticum (strain ATCC 700264 / AMB-1) (Magnetospirillum magneticum)).